We begin with the raw amino-acid sequence, 310 residues long: Methionyl-tRNA formyltransferase (310 aa).

109-112 (SLLP) is a (6S)-5,6,7,8-tetrahydrofolate binding site.

This sequence belongs to the Fmt family.

The catalysed reaction is L-methionyl-tRNA(fMet) + (6R)-10-formyltetrahydrofolate = N-formyl-L-methionyl-tRNA(fMet) + (6S)-5,6,7,8-tetrahydrofolate + H(+). In terms of biological role, attaches a formyl group to the free amino group of methionyl-tRNA(fMet). The formyl group appears to play a dual role in the initiator identity of N-formylmethionyl-tRNA by promoting its recognition by IF2 and preventing the misappropriation of this tRNA by the elongation apparatus. This Pseudomonas putida (strain GB-1) protein is Methionyl-tRNA formyltransferase.